The sequence spans 342 residues: Epoxide hydrolase srdG (342 aa).

The 289-residue stretch at 44 to 332 (ATVLLLHGWP…LIHTPEEVNK (289 aa)) folds into the AB hydrolase-1 domain. The active-site Nucleophile is aspartate 122. The active-site Proton acceptor is the histidine 320.

This sequence belongs to the AB hydrolase superfamily. Epoxide hydrolase family.

Its function is as follows. Highly reducing polyketide synthase; part of the gene cluster that mediates the biosynthesis of sordarial, a salicylic aldehyde structurally related to the phytotoxin pyriculol. The most interesting aspect of this pathway is formation of an aromatic product from the highly reducing polyketide synthase srdA. SrdA synthesizes a reduced polyketide chain from one molecule of acetyl-CoA and five molecules of malonyl-CoA. The polyketide chain is then reductively released as an aldehyde. The oxidoreductases srdC, srdD and srdE then oxidize one of the hydroxy groups to facilitate the intramolecular aldol condensation, followed by dehydration to yield a salicylic aldehyde. This aldehyde can undergo facile reduction by endogenous reductases to yield the alcohol 1-hydroxy-2-hydroxymethyl-3-pent-1,3-dienylbenzene. The flavin-dependent srdI counteract against the propensity of the aldehydes to be reduced under physiological conditions and is responsible for reoxidizing 1-hydroxy-2-hydroxymethyl-3-pent-1,3-dienylbenzene back to the salicylic aldehyde. This salicylic aldehyde is then selectively epoxidized by the cupin-domain-containing oxidoreductase srdB to yield the epoxide, which can be hydrolyzed stereoselectively by the hydrolase srdG to give the final product sordarial. The chain is Epoxide hydrolase srdG from Neurospora crassa (strain ATCC 24698 / 74-OR23-1A / CBS 708.71 / DSM 1257 / FGSC 987).